A 119-amino-acid chain; its full sequence is NLYQFKNMIKCTVPSRSWWDFADYGCYCGRGGSGTPVDDLDRCCQVHDNCYNEAEKISGCWPYFKTYSYECSQGTLTCKGDNNACAASVCDCDRLAAICFAGAPYNDNNYNIDLKARCQ.

7 disulfides stabilise this stretch: Cys11–Cys71, Cys26–Cys118, Cys28–Cys44, Cys43–Cys99, Cys50–Cys92, Cys60–Cys85, and Cys78–Cys90. 3 residues coordinate Ca(2+): Tyr27, Gly29, and Gly31. The active site involves His47. Asp48 contributes to the Ca(2+) binding site. Asp93 is an active-site residue.

The protein belongs to the phospholipase A2 family. Group I subfamily. D49 sub-subfamily. As to quaternary structure, homotrimer. The cofactor is Ca(2+). As to expression, expressed by the venom gland.

The protein localises to the secreted. The enzyme catalyses a 1,2-diacyl-sn-glycero-3-phosphocholine + H2O = a 1-acyl-sn-glycero-3-phosphocholine + a fatty acid + H(+). Functionally, PLA2 catalyzes the calcium-dependent hydrolysis of the 2-acyl groups in 3-sn-phosphoglycerides. This is Acidic phospholipase A2 2 from Naja naja (Indian cobra).